The sequence spans 536 residues: MLKIKRTWKTHSRILDKDPFSIEPPRKVIRALYDYTARKATEVSFAKGDFFHVIGRENDKAWYEVCNPAAGTRGFVPVSHFEEIGKTVKSERDSDGSGQISFTDLTTNSSTTRSSISELHSGSQPLFGIVQFDFAAERPDELEAKAGEAIIIIARSNHEWLVAKPIGRLGGPGLIPLSFIQLRDLKTGAVIKDVSEAVLRISCIPRVEDWKRAAADYKKSSIPLGKFSDGETQTMPSLSPSTENLQINNDVTYQAATDNSSTFPGSVANELTPLQTLESRTASIASKNKKDMSSEPTVVAAMVENYMIRDDQYWYLVRAVMSDGKHRNLCRYYEDFFNFQTKFLELFPNEAGRGDERRVIPYMPGPVDDVNELISSQRAMDLDVYLKEMCRLPARLLENELVKLFFLPLDGDVESPHPTSTMPEALPREPLSFSLPEKAPEKATNISIPESAPTTAGSTCKVKVRLGDETFALRVPSDISFEDFCERLTNKLGECEHLSYRDTNANKVLPLNNVDDLRKACSQESGVLLFAERRRF.

The SH3 1 domain occupies 24–86; the sequence is PPRKVIRALY…PVSHFEEIGK (63 aa). Residues 88-115 are disordered; that stretch reads VKSERDSDGSGQISFTDLTTNSSTTRSS. Low complexity predominate over residues 101-115; that stretch reads SFTDLTTNSSTTRSS. Positions 123–185 constitute an SH3 2 domain; it reads SQPLFGIVQF…PLSFIQLRDL (63 aa). Residues 293–413 form the PX domain; it reads SSEPTVVAAM…LFFLPLDGDV (121 aa). Positions 459-533 constitute a PB1 domain; it reads TCKVKVRLGD…ESGVLLFAER (75 aa).

In terms of assembly, scd1, scd2, cdc42, and ras1, in its GTP-bound state, act cooperatively to form a protein complex.

Required for mating and morphogenesis. Interacts directly with scd1 and with cdc42. May bridge and facilitate scd1 and cdc42 interactions. The polypeptide is Protein scd2/ral3 (scd2) (Schizosaccharomyces pombe (strain 972 / ATCC 24843) (Fission yeast)).